A 71-amino-acid chain; its full sequence is Small ribosomal subunit protein bS21 (71 aa).

The protein belongs to the bacterial ribosomal protein bS21 family.

The sequence is that of Small ribosomal subunit protein bS21 from Shewanella amazonensis (strain ATCC BAA-1098 / SB2B).